The following is a 343-amino-acid chain: S-adenosylmethionine:tRNA ribosyltransferase-isomerase (343 aa).

This sequence belongs to the QueA family. As to quaternary structure, monomer.

The protein localises to the cytoplasm. The catalysed reaction is 7-aminomethyl-7-carbaguanosine(34) in tRNA + S-adenosyl-L-methionine = epoxyqueuosine(34) in tRNA + adenine + L-methionine + 2 H(+). It participates in tRNA modification; tRNA-queuosine biosynthesis. Functionally, transfers and isomerizes the ribose moiety from AdoMet to the 7-aminomethyl group of 7-deazaguanine (preQ1-tRNA) to give epoxyqueuosine (oQ-tRNA). In Hydrogenobaculum sp. (strain Y04AAS1), this protein is S-adenosylmethionine:tRNA ribosyltransferase-isomerase.